We begin with the raw amino-acid sequence, 1515 residues long: Adhesion G protein-coupled receptor L1 (1515 aa).

The N-terminal stretch at 1–24 (MARLAAALWSLCVTTVLVTSATQG) is a signal peptide. Topologically, residues 25 to 857 (LSRAGLPFGL…EIYQGRINEL (833 aa)) are extracellular. In terms of domain architecture, SUEL-type lectin spans 40–129 (ACEGYPIELR…KYLEVQYDCV (90 aa)). Cystine bridges form between C41/C71, C50/C128, C83/C115, C96/C102, and C140/C322. E42 provides a ligand contact to alpha-L-rhamnose. N-linked (GlcNAc...) asparagine glycosylation is present at N98. 117–120 (GTYK) provides a ligand contact to alpha-L-rhamnose. The Olfactomedin-like domain maps to 139 to 398 (VCPGTLQKVL…VVRYSLEFGP (260 aa)). Residues 400-468 (DPSAGPATSP…APAPSTRRPP (69 aa)) form a disordered region. Over residues 405 to 441 (PATSPPLSTTTTARPTPLTSTASPAATTPLRRAPLTT) the composition is skewed to low complexity. Residues 453–468 (DLPPATAPAPSTRRPP) show a composition bias toward pro residues. Disulfide bonds link C480/C515 and C503/C532. 6 N-linked (GlcNAc...) asparagine glycosylation sites follow: N531, N640, N741, N800, N805, and N826. The region spanning 669–850 (PARFLAAKQN…AVLMAHREIY (182 aa)) is the GAIN-B domain. 2 disulfide bridges follow: C801-C832 and C820-C834. The interval 801–850 (CSFWNYSERSMLGYWSTQGCRLVESNKTHTTCACSHLTNFAVLMAHREIY) is GPS. A helical membrane pass occupies residues 858–878 (LLSVITWVGIVISLVCLAICI). Residues 879-892 (STFCFLRGLQTDRN) lie on the Cytoplasmic side of the membrane. The chain crosses the membrane as a helical span at residues 893–913 (TIHKNLCINLFLAELLFLVGI). At 914–919 (DKTQYE) the chain is on the extracellular side. Residues 920-940 (VACPIFAGLLHYFFLAAFSWL) traverse the membrane as a helical segment. Topologically, residues 941–964 (CLEGVHLYLLLVEVFESEYSRTKY) are cytoplasmic. The chain crosses the membrane as a helical span at residues 965 to 985 (YYLGGYCFPALVVGIAAAIDY). At 986–1001 (RSYGTEKACWLRVDNY) the chain is on the extracellular side. Residues 1002 to 1022 (FIWSFIGPVSFVIVVNLVFLM) form a helical membrane-spanning segment. The Cytoplasmic segment spans residues 1023–1049 (VTLHKMIRSSSVLKPDSSRLDNIKSWA). Residues 1050–1070 (LGAIALLFLLGLTWAFGLLFI) traverse the membrane as a helical segment. Residues 1071 to 1074 (NKES) are Extracellular-facing. A helical transmembrane segment spans residues 1075–1095 (VVMAYLFTTFNAFQGVFIFVF). Residues 1096–1515 (HCALQKKVHK…DGQMQLVTSL (420 aa)) are Cytoplasmic-facing. Positions 1144 to 1184 (TQVPGQGRHIHQVSLGPRGRSALPESQKDPGGQSGPGDPLT) are disordered. R1237 is subject to Omega-N-methylarginine. S1263 bears the Phosphoserine mark. Disordered stretches follow at residues 1291 to 1316 (FNNSYSLRSGDFPPGDGGPEPPRGRN), 1337 to 1369 (RGASGGAKGPPPEPPVPPVPGVSEDEAGGPGGA), 1401 to 1470 (ESES…SRPP), and 1492 to 1515 (YLAAPSLEGPGPDGDGQMQLVTSL). 2 stretches are compositionally biased toward pro residues: residues 1345 to 1356 (GPPPEPPVPPVP) and 1449 to 1461 (ALPPPPPAPPGPP). A phosphoserine mark is found at S1497 and S1514.

It belongs to the G-protein coupled receptor 2 family. Adhesion G-protein coupled receptor (ADGR) subfamily. In terms of assembly, forms a heterodimer, consisting of a large extracellular region (p120) non-covalently linked to a seven-transmembrane moiety (p85). Interacts with syntaxin and with proteins of the SHANK family via the PDZ domain. Isoform 2 interacts with TENM2. Interacts (via extracellular domain) with FLRT1, FLRT2 and FLRT3 (via extracellular domain). Post-translationally, autoproteolytically cleaved into 2 subunits, an extracellular subunit and a seven-transmembrane subunit. This proteolytic processing takes place early in the biosynthetic pathway, either in the endoplasmic reticulum or in the early compartment of the Golgi apparatus. Expressed in the brain (at protein level). Brain specific distribution but low levels are also detected in most tissues.

The protein localises to the cell membrane. Its subcellular location is the cell projection. It localises to the axon. It is found in the growth cone. The protein resides in the synapse. The protein localises to the presynaptic cell membrane. Its subcellular location is the synaptosome. Calcium-independent receptor of high affinity for alpha-latrotoxin, an excitatory neurotoxin present in black widow spider venom which triggers massive exocytosis from neurons and neuroendocrine cells. Receptor probably implicated in the regulation of exocytosis. Functionally, receptor for TENM2 that mediates heterophilic synaptic cell-cell contact and postsynaptic specialization. This chain is Adhesion G protein-coupled receptor L1, found in Rattus norvegicus (Rat).